A 289-amino-acid polypeptide reads, in one-letter code: MRVGVVGHRGYVGLPAVLNTLLDSAPALNFTLAFEEELWDMAEEGERLTQDTPIDAMITLGGDGTLLRGARLVNGRKIPILGVNFGRLGFLTSCSADEMEDGVQRLARGDFVSEPRMVLESCAIDGDRSERCRWRALNDVVMHKGGFARLVKFSVLVDGEHIGSYSADGLIISTPTGSTGYSLSAGGPIVMPTFESIVLTPVSPHTLAMRPLVLPADVEVTVRADDGPEELLVTVDGQVGTTFTGGETLIVRRAPEPVHIVRLPGATFFTRLRHKLGWGGLSGRDGEAT.

Catalysis depends on Asp-63, which acts as the Proton acceptor. NAD(+)-binding positions include Asp-63 to Gly-64, Arg-68, Asn-138 to Asp-139, Arg-149, Asp-168, Thr-179 to Ser-184, and Gln-238.

It belongs to the NAD kinase family. Requires a divalent metal cation as cofactor.

The protein localises to the cytoplasm. The enzyme catalyses NAD(+) + ATP = ADP + NADP(+) + H(+). In terms of biological role, involved in the regulation of the intracellular balance of NAD and NADP, and is a key enzyme in the biosynthesis of NADP. Catalyzes specifically the phosphorylation on 2'-hydroxyl of the adenosine moiety of NAD to yield NADP. This chain is NAD kinase, found in Gemmatimonas aurantiaca (strain DSM 14586 / JCM 11422 / NBRC 100505 / T-27).